A 247-amino-acid polypeptide reads, in one-letter code: 2,3-bisphosphoglycerate-dependent phosphoglycerate mutase (247 aa).

Residues 8 to 15, 21 to 22, R60, 87 to 90, K98, 114 to 115, and 183 to 184 contribute to the substrate site; these read RHGESVWN, TG, ERHY, RR, and GN. H9 (tele-phosphohistidine intermediate) is an active-site residue. E87 functions as the Proton donor/acceptor in the catalytic mechanism.

It belongs to the phosphoglycerate mutase family. BPG-dependent PGAM subfamily. Homodimer.

It carries out the reaction (2R)-2-phosphoglycerate = (2R)-3-phosphoglycerate. Its pathway is carbohydrate degradation; glycolysis; pyruvate from D-glyceraldehyde 3-phosphate: step 3/5. Its function is as follows. Catalyzes the interconversion of 2-phosphoglycerate and 3-phosphoglycerate. The polypeptide is 2,3-bisphosphoglycerate-dependent phosphoglycerate mutase (Geobacter metallireducens (strain ATCC 53774 / DSM 7210 / GS-15)).